Here is a 500-residue protein sequence, read N- to C-terminus: Probable cytosol aminopeptidase (500 aa).

Positions 264 and 269 each coordinate Mn(2+). Residue K276 is part of the active site. Mn(2+)-binding residues include D287, D346, and E348. The active site involves R350.

The protein belongs to the peptidase M17 family. The cofactor is Mn(2+).

It localises to the cytoplasm. It carries out the reaction Release of an N-terminal amino acid, Xaa-|-Yaa-, in which Xaa is preferably Leu, but may be other amino acids including Pro although not Arg or Lys, and Yaa may be Pro. Amino acid amides and methyl esters are also readily hydrolyzed, but rates on arylamides are exceedingly low.. The catalysed reaction is Release of an N-terminal amino acid, preferentially leucine, but not glutamic or aspartic acids.. Functionally, presumably involved in the processing and regular turnover of intracellular proteins. Catalyzes the removal of unsubstituted N-terminal amino acids from various peptides. The polypeptide is Probable cytosol aminopeptidase (Rhodopseudomonas palustris (strain BisB5)).